The chain runs to 876 residues: Translation initiation factor IF-2 (876 aa).

The tr-type G domain occupies 378–547 (TRPPIITIMG…LTQSEMLELK (170 aa)). Residues 387–394 (GHVDHGKT) form a G1 region. 387–394 (GHVDHGKT) is a GTP binding site. The segment at 412-416 (RITQH) is G2. The segment at 433–436 (DTPG) is G3. Residues 433–437 (DTPGH) and 487–490 (NKID) each bind GTP. The tract at residues 487 to 490 (NKID) is G4. The segment at 523–525 (SAK) is G5.

It belongs to the TRAFAC class translation factor GTPase superfamily. Classic translation factor GTPase family. IF-2 subfamily.

It localises to the cytoplasm. One of the essential components for the initiation of protein synthesis. Protects formylmethionyl-tRNA from spontaneous hydrolysis and promotes its binding to the 30S ribosomal subunits. Also involved in the hydrolysis of GTP during the formation of the 70S ribosomal complex. In Buchnera aphidicola subsp. Baizongia pistaciae (strain Bp), this protein is Translation initiation factor IF-2.